Reading from the N-terminus, the 154-residue chain is Low molecular weight protein-tyrosine-phosphatase PtpA (154 aa).

C8 acts as the Nucleophile in catalysis. R14 is a catalytic residue. Residue D120 is the Proton donor of the active site.

It belongs to the low molecular weight phosphotyrosine protein phosphatase family. As to quaternary structure, interacts with host CORO1A. In terms of processing, phosphorylations at Tyr-122 and Tyr-123 are essential for phosphatase activity.

The protein resides in the secreted. It carries out the reaction O-phospho-L-tyrosyl-[protein] + H2O = L-tyrosyl-[protein] + phosphate. In terms of biological role, secreted tyrosine phosphatase that plays a critical role during infection as a bacterial effector protein that counteracts host defenses. Required for intramacrophage survival. This Staphylococcus aureus (strain MRSA252) protein is Low molecular weight protein-tyrosine-phosphatase PtpA (ptpA).